The following is a 227-amino-acid chain: Isopentenyl-diphosphate delta-isomerase 2 (227 aa).

Lys-36 provides a ligand contact to substrate. Mg(2+) is bound by residues His-40 and His-51. Positions 49–199 (LLHRAFSVVL…EVKVTPWLRT (151 aa)) constitute a Nudix hydrolase domain. Positions 70 and 74 each coordinate substrate. Ser-86 is a catalytic residue. Ser-87 contributes to the substrate binding site. Residues Glu-146 and Glu-148 each contribute to the Mg(2+) site. The active site involves Glu-148. The short motif at 225 to 227 (HRV) is the Microbody targeting signal element.

It belongs to the IPP isomerase type 1 family. The cofactor is Mg(2+). Muscle-specific expression.

Its subcellular location is the peroxisome. It carries out the reaction isopentenyl diphosphate = dimethylallyl diphosphate. The protein operates within isoprenoid biosynthesis; dimethylallyl diphosphate biosynthesis; dimethylallyl diphosphate from isopentenyl diphosphate: step 1/1. Its function is as follows. Catalyzes the 1,3-allylic rearrangement of the homoallylic substrate isopentenyl (IPP) to its highly electrophilic allylic isomer, dimethylallyl diphosphate (DMAPP). This Homo sapiens (Human) protein is Isopentenyl-diphosphate delta-isomerase 2 (IDI2).